The primary structure comprises 232 residues: Orotidine 5'-phosphate decarboxylase (232 aa).

Residues aspartate 13, lysine 35, 62–71 (DLKFHDIPNT), threonine 121, arginine 182, glutamine 191, glycine 211, and arginine 212 each bind substrate. The active-site Proton donor is lysine 64.

It belongs to the OMP decarboxylase family. Type 1 subfamily. In terms of assembly, homodimer.

It catalyses the reaction orotidine 5'-phosphate + H(+) = UMP + CO2. Its pathway is pyrimidine metabolism; UMP biosynthesis via de novo pathway; UMP from orotate: step 2/2. In terms of biological role, catalyzes the decarboxylation of orotidine 5'-monophosphate (OMP) to uridine 5'-monophosphate (UMP). The protein is Orotidine 5'-phosphate decarboxylase of Acinetobacter baumannii (strain AB0057).